We begin with the raw amino-acid sequence, 123 residues long: Small ribosomal subunit protein uS12 (123 aa).

The segment at 1-28 (MPTIQQLIRKPRQPKVKRSKSMHLEQCP) is disordered. The segment covering 9–21 (RKPRQPKVKRSKS) has biased composition (basic residues). At Asp-89 the chain carries 3-methylthioaspartic acid.

Belongs to the universal ribosomal protein uS12 family. Part of the 30S ribosomal subunit. Contacts proteins S8 and S17. May interact with IF1 in the 30S initiation complex.

With S4 and S5 plays an important role in translational accuracy. Functionally, interacts with and stabilizes bases of the 16S rRNA that are involved in tRNA selection in the A site and with the mRNA backbone. Located at the interface of the 30S and 50S subunits, it traverses the body of the 30S subunit contacting proteins on the other side and probably holding the rRNA structure together. The combined cluster of proteins S8, S12 and S17 appears to hold together the shoulder and platform of the 30S subunit. In Ruegeria sp. (strain TM1040) (Silicibacter sp.), this protein is Small ribosomal subunit protein uS12.